We begin with the raw amino-acid sequence, 172 residues long: Adenylate kinase isoenzyme 6 (172 aa).

Residues Gly13, Gly15, Lys16, Thr17, and Thr18 each coordinate ATP. The interval 33-56 (NVGDLAREGHLYDGYDEEYGCPIL) is NMPbind. Positions 108-118 (TRGYHEKKLQD) are LID. Arg109 contributes to the ATP binding site.

It belongs to the adenylate kinase family. AK6 subfamily. Monomer and homodimer. Interacts with small ribosomal subunit protein uS11. Not a structural component of 43S pre-ribosomes, but transiently interacts with them by binding to uS11. Interacts with COIL (via C-terminus).

It localises to the cytoplasm. Its subcellular location is the nucleus. It is found in the nucleoplasm. The protein localises to the cajal body. It carries out the reaction AMP + ATP = 2 ADP. The enzyme catalyses ATP + H2O = ADP + phosphate + H(+). Its function is as follows. Broad-specificity nucleoside monophosphate (NMP) kinase that catalyzes the reversible transfer of the terminal phosphate group between nucleoside triphosphates and monophosphates. Also has ATPase activity. Involved in the late cytoplasmic maturation steps of the 40S ribosomal particles, specifically 18S rRNA maturation. While NMP activity is not required for ribosome maturation, ATPase activity is. Associates transiently with small ribosomal subunit protein uS11. ATP hydrolysis breaks the interaction with uS11. May temporarily remove uS11 from the ribosome to enable a conformational change of the ribosomal RNA that is needed for the final maturation step of the small ribosomal subunit. Its NMP activity may have a role in nuclear energy homeostasis. May be involved in regulation of Cajal body (CB) formation. In Rattus norvegicus (Rat), this protein is Adenylate kinase isoenzyme 6.